The following is a 130-amino-acid chain: Holo-[acyl-carrier-protein] synthase (130 aa).

Residues Asp8 and Glu62 each contribute to the Mg(2+) site.

This sequence belongs to the P-Pant transferase superfamily. AcpS family. Mg(2+) is required as a cofactor.

It localises to the cytoplasm. It catalyses the reaction apo-[ACP] + CoA = holo-[ACP] + adenosine 3',5'-bisphosphate + H(+). In terms of biological role, transfers the 4'-phosphopantetheine moiety from coenzyme A to a Ser of acyl-carrier-protein. In Acidovorax ebreus (strain TPSY) (Diaphorobacter sp. (strain TPSY)), this protein is Holo-[acyl-carrier-protein] synthase.